Consider the following 142-residue polypeptide: Large ribosomal subunit protein uL13 (142 aa).

Belongs to the universal ribosomal protein uL13 family. As to quaternary structure, part of the 50S ribosomal subunit.

In terms of biological role, this protein is one of the early assembly proteins of the 50S ribosomal subunit, although it is not seen to bind rRNA by itself. It is important during the early stages of 50S assembly. This Actinobacillus pleuropneumoniae serotype 5b (strain L20) protein is Large ribosomal subunit protein uL13.